The following is a 502-amino-acid chain: RNA-splicing ligase RtcB homolog 2 (502 aa).

Residues Asp120, Cys123, His228, His260, and His354 each coordinate Mn(2+). 227 to 231 contributes to the GMP binding site; it reads NHYAE. Residues 354–355, 403–406, Ser410, and 429–432 each bind GMP; these read HN, GGSM, and HGAG. His429 functions as the GMP-histidine intermediate in the catalytic mechanism.

It belongs to the RtcB family. As to quaternary structure, catalytic component of the tRNA-splicing ligase complex. Mn(2+) serves as cofactor.

It catalyses the reaction a 3'-end 3'-phospho-ribonucleotide-RNA + a 5'-end dephospho-ribonucleoside-RNA + GTP = a ribonucleotidyl-ribonucleotide-RNA + GMP + diphosphate. It carries out the reaction a 3'-end 2',3'-cyclophospho-ribonucleotide-RNA + a 5'-end dephospho-ribonucleoside-RNA + GTP + H2O = a ribonucleotidyl-ribonucleotide-RNA + GMP + diphosphate + H(+). In terms of biological role, catalytic subunit of the tRNA-splicing ligase complex that acts by directly joining spliced tRNA halves to mature-sized tRNAs by incorporating the precursor-derived splice junction phosphate into the mature tRNA as a canonical 3',5'-phosphodiester. May act as an RNA ligase with broad substrate specificity, and may function toward other RNAs. In Culex quinquefasciatus (Southern house mosquito), this protein is RNA-splicing ligase RtcB homolog 2.